The following is a 179-amino-acid chain: Large ribosomal subunit protein bL17 (179 aa).

Residues 123-179 (RTRGTDTLPDTVTDTGPDSAPDPVPGSEPGSAAGDLPDADTAPADPGESSSNQRVIR) are disordered. The segment covering 154–168 (AAGDLPDADTAPADP) has biased composition (low complexity). Residues 170–179 (ESSSNQRVIR) show a composition bias toward polar residues.

This sequence belongs to the bacterial ribosomal protein bL17 family. As to quaternary structure, part of the 50S ribosomal subunit. Contacts protein L32.

In Tropheryma whipplei (strain Twist) (Whipple's bacillus), this protein is Large ribosomal subunit protein bL17.